An 820-amino-acid polypeptide reads, in one-letter code: Leucine-rich repeat and guanylate kinase domain-containing protein (820 aa).

Over residues 72–83 (EAEAEQEEKQQE) the composition is skewed to basic and acidic residues. The segment at 72–96 (EAEAEQEEKQQEDGESEESEESEMQ) is disordered. Residues 84 to 94 (DGESEESEESE) show a composition bias toward acidic residues. 9 LRR repeats span residues 129–149 (YLNLNLSHCELVDISILCGYV), 150–171 (HLQKLNLSGNRIEDLSCVSCMP), 172–193 (YLLELNASQNKLTTFFNFKPPQ), 194–215 (NLKKVDFSSNLISEMYDLSAYH), 216–237 (TLTQLILDNNEIEEITGLENCI), 238–259 (SLTHLSLAGNKITTIKGLGTLP), 260–280 (IKVLSLSNNMIETITGLEELK), 281–302 (ALQNLDLSHNQISSLQGLENHD), and 303–324 (LLEVINLEDNKIKELSEIEYIE). Residues 337–375 (NPIQTKPEYWFFVIYMLLRLTELDQQKIKVEEKVFAVNK) enclose the LRRCT domain. The region spanning 414-597 (YPMLILTGPA…AYQKLSELIR (184 aa)) is the Guanylate kinase-like domain. 421 to 428 (GPAACGKR) is a binding site for ATP. Residues 800–820 (TIMDPGSNTKPTLPPIPHGRR) form a disordered region. Residues 811–820 (TLPPIPHGRR) are compositionally biased toward pro residues.

In terms of assembly, interacts (via guanylate kinase-like domain) with RIMBP3 (via coiled-coil region). Interacts (via guanylate kinase-like domain) with HOOK2. Interacts (via LRRCT domain) with KLC3. Interacts with HOOK1 and HOOK3. Highly expressed in the testis. During spermatid development is initially localized to a supra-nuclear region of round spermatids, and is particularly evident at the leading edge of the developing acrosome and acroplaxome. As maturation proceeded and nuclear elongation initiated, LRGUK moves distally to ultimately reside on the microtubules of the manchette. LRGUK is also evident in the sperm basal body and the sperm tail.

The protein localises to the cytoplasmic vesicle. The protein resides in the secretory vesicle. It localises to the acrosome. Its subcellular location is the cytoplasm. It is found in the cytoskeleton. The protein localises to the cilium basal body. In terms of biological role, involved in multiple aspects of sperm assembly including acrosome attachment, shaping of the sperm head and in the early aspects of axoneme development. Not essential for primary cilium biogenesis. This chain is Leucine-rich repeat and guanylate kinase domain-containing protein (Lrguk), found in Mus musculus (Mouse).